The chain runs to 346 residues: Galactitol 1-phosphate 5-dehydrogenase (346 aa).

Positions 38, 59, 89, 92, 95, 103, and 144 each coordinate Zn(2+).

The protein belongs to the zinc-containing alcohol dehydrogenase family. The cofactor is Zn(2+).

It catalyses the reaction galactitol 1-phosphate + NAD(+) = keto-D-tagatose 6-phosphate + NADH + H(+). Functionally, converts galactitol 1-phosphate to tagatose 6-phosphate. This is Galactitol 1-phosphate 5-dehydrogenase (gatD) from Escherichia coli O157:H7.